Here is a 193-residue protein sequence, read N- to C-terminus: dITP/XTP pyrophosphatase (193 aa).

7-12 (SENENK) provides a ligand contact to substrate. Asp-65 acts as the Proton acceptor in catalysis. Asp-65 serves as a coordination point for Mg(2+). Substrate-binding positions include Ser-66, 144–147 (FGYD), Lys-167, and 172–173 (HR).

The protein belongs to the HAM1 NTPase family. Homodimer. Requires Mg(2+) as cofactor.

The enzyme catalyses XTP + H2O = XMP + diphosphate + H(+). The catalysed reaction is dITP + H2O = dIMP + diphosphate + H(+). It catalyses the reaction ITP + H2O = IMP + diphosphate + H(+). In terms of biological role, pyrophosphatase that catalyzes the hydrolysis of nucleoside triphosphates to their monophosphate derivatives, with a high preference for the non-canonical purine nucleotides XTP (xanthosine triphosphate), dITP (deoxyinosine triphosphate) and ITP. Seems to function as a house-cleaning enzyme that removes non-canonical purine nucleotides from the nucleotide pool, thus preventing their incorporation into DNA/RNA and avoiding chromosomal lesions. The polypeptide is dITP/XTP pyrophosphatase (Tropheryma whipplei (strain TW08/27) (Whipple's bacillus)).